Here is a 206-residue protein sequence, read N- to C-terminus: dITP/XTP pyrophosphatase (206 aa).

7–12 (SCHGYK) is a substrate binding site. The active-site Proton acceptor is the Asp-70. Asp-70 contributes to the Mg(2+) binding site. Substrate-binding positions include Thr-71, 154-157 (FGYD), Lys-177, and 182-183 (HR).

This sequence belongs to the HAM1 NTPase family. As to quaternary structure, homodimer. Mg(2+) serves as cofactor.

The catalysed reaction is XTP + H2O = XMP + diphosphate + H(+). The enzyme catalyses dITP + H2O = dIMP + diphosphate + H(+). It catalyses the reaction ITP + H2O = IMP + diphosphate + H(+). Functionally, pyrophosphatase that catalyzes the hydrolysis of nucleoside triphosphates to their monophosphate derivatives, with a high preference for the non-canonical purine nucleotides XTP (xanthosine triphosphate), dITP (deoxyinosine triphosphate) and ITP. Seems to function as a house-cleaning enzyme that removes non-canonical purine nucleotides from the nucleotide pool, thus preventing their incorporation into DNA/RNA and avoiding chromosomal lesions. In Chlamydia caviae (strain ATCC VR-813 / DSM 19441 / 03DC25 / GPIC) (Chlamydophila caviae), this protein is dITP/XTP pyrophosphatase.